The primary structure comprises 372 residues: Cytochrome b (372 aa).

The next 4 membrane-spanning stretches (helical) occupy residues 25–45 (FGSM…FLAI), 69–90 (WMMQ…YIHI), 105–125 (WLSG…GYVL), and 170–190 (FFAL…IHIM). Heme b is bound by residues His75 and His89. 2 residues coordinate heme b: His174 and His188. His193 is an a ubiquinone binding site. 4 consecutive transmembrane segments (helical) span residues 218–238 (HKDM…MSFN), 280–300 (LGGA…PFTH), 312–332 (LMQF…WAAT), and 339–358 (FTTI…IMNP).

Belongs to the cytochrome b family. As to quaternary structure, the cytochrome bc1 complex contains 3 respiratory subunits (MT-CYB, CYC1 and UQCRFS1), 2 core proteins (UQCRC1 and UQCRC2) and probably 6 low-molecular weight proteins. Heme b is required as a cofactor.

The protein resides in the mitochondrion inner membrane. Its function is as follows. Component of the ubiquinol-cytochrome c reductase complex (complex III or cytochrome b-c1 complex) that is part of the mitochondrial respiratory chain. The b-c1 complex mediates electron transfer from ubiquinol to cytochrome c. Contributes to the generation of a proton gradient across the mitochondrial membrane that is then used for ATP synthesis. This Pantherophis bairdi (Baird's ratsnake) protein is Cytochrome b (MT-CYB).